The following is a 413-amino-acid chain: 3-isopropylmalate dehydratase large subunit (413 aa).

[4Fe-4S] cluster contacts are provided by C295, C353, and C356.

This sequence belongs to the aconitase/IPM isomerase family. LeuC type 2 subfamily. Heterodimer of LeuC and LeuD. The cofactor is [4Fe-4S] cluster.

It catalyses the reaction (2R,3S)-3-isopropylmalate = (2S)-2-isopropylmalate. It functions in the pathway amino-acid biosynthesis; L-leucine biosynthesis; L-leucine from 3-methyl-2-oxobutanoate: step 2/4. Catalyzes the isomerization between 2-isopropylmalate and 3-isopropylmalate, via the formation of 2-isopropylmaleate. The chain is 3-isopropylmalate dehydratase large subunit from Pyrobaculum calidifontis (strain DSM 21063 / JCM 11548 / VA1).